The sequence spans 295 residues: 4-hydroxy-tetrahydrodipicolinate synthase (295 aa).

Residue Thr48 coordinates pyruvate. The active-site Proton donor/acceptor is the Tyr136. The active-site Schiff-base intermediate with substrate is the Lys164. Residue Ile206 participates in pyruvate binding.

It belongs to the DapA family. Homotetramer; dimer of dimers.

The protein resides in the cytoplasm. The catalysed reaction is L-aspartate 4-semialdehyde + pyruvate = (2S,4S)-4-hydroxy-2,3,4,5-tetrahydrodipicolinate + H2O + H(+). It functions in the pathway amino-acid biosynthesis; L-lysine biosynthesis via DAP pathway; (S)-tetrahydrodipicolinate from L-aspartate: step 3/4. Functionally, catalyzes the condensation of (S)-aspartate-beta-semialdehyde [(S)-ASA] and pyruvate to 4-hydroxy-tetrahydrodipicolinate (HTPA). The polypeptide is 4-hydroxy-tetrahydrodipicolinate synthase (Actinobacillus pleuropneumoniae serotype 7 (strain AP76)).